A 317-amino-acid chain; its full sequence is Fe-S cluster assembly protein DRE2 (317 aa).

Positions M1–V131 are N-terminal SAM-like domain. The linker stretch occupies residues P132–M209. The [2Fe-2S] cluster site is built by C219, C230, C233, and C235. Positions C219–C235 are fe-S binding site A. [4Fe-4S] cluster-binding residues include C280, C283, C291, and C294. 2 consecutive short sequence motifs (cx2C motif) follow at residues C280–C283 and C291–C294. Residues C280–C294 form a fe-S binding site B region.

It belongs to the anamorsin family. Monomer. Interacts with TAH18. Interacts with MIA40. The cofactor is [2Fe-2S] cluster. Requires [4Fe-4S] cluster as cofactor.

Its subcellular location is the cytoplasm. It localises to the mitochondrion intermembrane space. In terms of biological role, component of the cytosolic iron-sulfur (Fe-S) protein assembly (CIA) machinery required for the maturation of extramitochondrial Fe-S proteins. Part of an electron transfer chain functioning in an early step of cytosolic Fe-S biogenesis, facilitating the de novo assembly of a [4Fe-4S] cluster on the scaffold complex CFD1-NBP35. Electrons are transferred to DRE2 from NADPH via the FAD- and FMN-containing protein TAH18. TAH18-DRE2 are also required for the assembly of the diferric tyrosyl radical cofactor of ribonucleotide reductase (RNR), probably by providing electrons for reduction during radical cofactor maturation in the catalytic small subunit RNR2. This Uncinocarpus reesii (strain UAMH 1704) protein is Fe-S cluster assembly protein DRE2.